The primary structure comprises 320 residues: Ferrochelatase (320 aa).

Fe cation contacts are provided by H194 and E275.

It belongs to the ferrochelatase family. Monomer.

It is found in the cytoplasm. The enzyme catalyses heme b + 2 H(+) = protoporphyrin IX + Fe(2+). It functions in the pathway porphyrin-containing compound metabolism; protoheme biosynthesis; protoheme from protoporphyrin-IX: step 1/1. In terms of biological role, catalyzes the ferrous insertion into protoporphyrin IX. The sequence is that of Ferrochelatase from Escherichia coli (strain 55989 / EAEC).